The following is a 270-amino-acid chain: Zinc finger protein ZAT2 (270 aa).

2 stretches are compositionally biased toward polar residues: residues 1 to 28 and 36 to 48; these read MSNT…YNQN and LTNN…SSSP. The segment at 1–64 is disordered; it reads MSNTSNSDPN…QPDPDASQIA (64 aa). The segment at 65–87 adopts a C2H2-type 1 zinc-finger fold; that stretch reads RPCTECGKQFGSLKALFGHMRCH. The tract at residues 95–119 is disordered; it reads INPPSNFKRRINSNAASSSSSWDPS. A compositionally biased stretch (low complexity) spans 106-115; sequence NSNAASSSSS. C2H2-type zinc fingers lie at residues 148-170 and 211-233; these read FECD…RATH and HRCN…MRCH.

In terms of assembly, interacts (via the EAR motif) with TPL. Expressed exclusively in pollen.

It is found in the nucleus. In terms of biological role, mediates the regulation of male germ cell division by DUO1. This Arabidopsis thaliana (Mouse-ear cress) protein is Zinc finger protein ZAT2.